The sequence spans 318 residues: Ubiquitin-conjugating enzyme E2 J1 (318 aa).

Residues 1 to 282 (METRYNLKSP…QGQPPRAHHT (282 aa)) are Cytoplasmic-facing. The UBC core domain occupies 10-168 (PAVKRLMKEA…VLLPLKSGSG (159 aa)). The active-site Glycyl thioester intermediate is cysteine 91. At serine 184 the chain carries Phosphoserine. Over residues 215 to 233 (PTTFQGATASTSYGAQNPS) the composition is skewed to polar residues. Positions 215–283 (PTTFQGATAS…GQPPRAHHTE (69 aa)) are disordered. Low complexity predominate over residues 249–269 (SMSPRQRRAQQQSQRRPSTSP). 2 positions are modified to phosphoserine: serine 266 and serine 268. Residues 283 to 303 (EHGGSAMLIIILTLALAALIF) traverse the membrane as a helical; Anchor for type IV membrane protein segment. The Lumenal portion of the chain corresponds to 304–318 (RRIYLANEYIFDFEL).

This sequence belongs to the ubiquitin-conjugating enzyme family. As to quaternary structure, component of the HRD1 complex, which comprises at least SYNV1/HRD1, DERL1/2, FAM8A1, HERPUD1/HERP, OS9, SEL1L and UBE2J1. Interacts with E3 ligase RNF26. Interacts with E3 ligase RNF133. Post-translationally, phosphorylated at Ser-184 in a cytosolic stress-dependent manner by MAP kinase p38 MAPKAPK2. Phosphorylated UBE2J1 is rapidly ubiquitinated and subsequently degraded by the proteasome.

It localises to the endoplasmic reticulum membrane. It catalyses the reaction S-ubiquitinyl-[E1 ubiquitin-activating enzyme]-L-cysteine + [E2 ubiquitin-conjugating enzyme]-L-cysteine = [E1 ubiquitin-activating enzyme]-L-cysteine + S-ubiquitinyl-[E2 ubiquitin-conjugating enzyme]-L-cysteine.. Its pathway is protein modification; protein ubiquitination. Functionally, catalyzes the covalent attachment of ubiquitin to other proteins. Functions in the selective degradation of misfolded membrane proteins from the endoplasmic reticulum (ERAD) and is essential for cells to recover from ER stress. Plays a role in MAPKAPK2-dependent translational control of TNF-alpha synthesis. Also acts as a platform for perinuclear positioning of the endosomal system by mediating ubiquitination of SQSTM1 through interaction with the E3 ubiquitin-protein ligase RNF26. Plays a role in male fecundity through the interaction with the E3 ubiquitin-protein ligase RNF133. The chain is Ubiquitin-conjugating enzyme E2 J1 (Ube2j1) from Mus musculus (Mouse).